The following is a 107-amino-acid chain: Glutaredoxin-1 (107 aa).

An N-acetylalanine modification is found at Ala2. Residues 3–106 (QEFVNCKIQS…ARLKQIGALQ (104 aa)) enclose the Glutaredoxin domain. Lys9 carries the post-translational modification N6-succinyllysine. Cystine bridges form between Cys23–Cys26 and Cys79–Cys83.

It belongs to the glutaredoxin family.

It is found in the cytoplasm. Its function is as follows. Has a glutathione-disulfide oxidoreductase activity in the presence of NADPH and glutathione reductase. Reduces low molecular weight disulfides and proteins. This Rattus norvegicus (Rat) protein is Glutaredoxin-1 (Glrx).